Reading from the N-terminus, the 544-residue chain is Lysophosphatidylcholine acyltransferase 2 (544 aa).

At 1 to 57 (MSRCAQAAEVAATVPGAGVGNVGLRPPMVPRQASFFPPPVPNPFVQQTQIGSARRVQ) the chain is on the cytoplasmic side. Residues 58–78 (IVLLGIILLPIRVLLVALILL) form a helical; Signal-anchor for type II membrane protein membrane-spanning segment. At 79–544 (LAWPFAAIST…EESTSDKKDD (466 aa)) the chain is on the lumenal side. Residues 146-151 (HSTFFD) carry the HXXXXD motif motif. An EGTC motif motif is present at residues 220–223 (EGTC). 2 consecutive EF-hand domains span residues 391–426 (PVSDVLRQLFALFDRNHDGSIDFREYVIGLAVLCNP) and 428–463 (NTEEIIQVAFKLFDVDEDGYITEEEFSTILQASLGV). 10 residues coordinate Ca(2+): D404, N406, D408, S410, E415, D441, D443, D445, Y447, and E452. Residues 518-529 (VQTTPSTASNKV) show a composition bias toward polar residues. The disordered stretch occupies residues 518–544 (VQTTPSTASNKVSPEKHEESTSDKKDD). Over residues 530–544 (SPEKHEESTSDKKDD) the composition is skewed to basic and acidic residues.

This sequence belongs to the 1-acyl-sn-glycerol-3-phosphate acyltransferase family.

The protein resides in the endoplasmic reticulum membrane. It is found in the golgi apparatus membrane. The protein localises to the cell membrane. Its subcellular location is the lipid droplet. It carries out the reaction a 1-acyl-sn-glycero-3-phosphocholine + an acyl-CoA = a 1,2-diacyl-sn-glycero-3-phosphocholine + CoA. It catalyses the reaction a 1-O-alkyl-sn-glycero-3-phosphocholine + acetyl-CoA = a 1-O-alkyl-2-acetyl-sn-glycero-3-phosphocholine + CoA. The enzyme catalyses a 1-acyl-sn-glycero-3-phosphate + an acyl-CoA = a 1,2-diacyl-sn-glycero-3-phosphate + CoA. The catalysed reaction is a 1-O-(1Z-alkenyl)-sn-glycero-3-phosphocholine + an acyl-CoA = a 1-O-(1Z-alkenyl)-2-acyl-sn-glycero-3-phosphocholine + CoA. It carries out the reaction 1-hexadecanoyl-sn-glycero-3-phosphate + (9Z)-octadecenoyl-CoA = 1-hexadecanoyl-2-(9Z-octadecenoyl)-sn-glycero-3-phosphate + CoA. It catalyses the reaction 1-(9Z-octadecenoyl)-sn-glycero-3-phosphate + (9Z)-octadecenoyl-CoA = 1,2-di-(9Z-octadecenoyl)-sn-glycero-3-phosphate + CoA. The enzyme catalyses 1-(9Z-octadecenoyl)-sn-glycero-3-phosphate + hexadecanoyl-CoA = 1-(9Z)-octadecenoyl-2-hexadecanoyl-sn-glycero-3-phosphate + CoA. The catalysed reaction is 1-heptadecanoyl-sn-glycero-3-phosphate + (9Z)-octadecenoyl-CoA = 1-heptadecanoyl-2-(9Z)-octadecenoyl-sn-glycero-3-phosphate + CoA. It carries out the reaction 1-octadecanoyl-sn-glycero-3-phosphate + (9Z)-octadecenoyl-CoA = 1-octadecanoyl-2-(9Z-octadecenoyl)-sn-glycero-3-phosphate + CoA. It catalyses the reaction heptadecanoyl-CoA + 1-(9Z-octadecenoyl)-sn-glycero-3-phosphate = 1-(9Z)-octadecenoyl-2-heptadecanoyl-sn-glycero-3-phosphate + CoA. The enzyme catalyses 1-(9Z-octadecenoyl)-sn-glycero-3-phosphate + (9Z,12Z)-octadecadienoyl-CoA = 1-(9Z)-octadecenoyl-2-(9Z,12Z)-octadecadienoyl-sn-glycero-3-phosphate + CoA. The catalysed reaction is 1-(9Z-octadecenoyl)-sn-glycero-3-phosphate + tetradecanoyl-CoA = 1-(9Z)-octadecenoyl-2-tetradecanoyl-sn-glycero-3-phosphate + CoA. It carries out the reaction pentadecanoyl-CoA + 1-(9Z-octadecenoyl)-sn-glycero-3-phosphate = 1-(9Z)-octadecenoyl-2-pentadecanoyl-sn-glycero-3-phosphate + CoA. It catalyses the reaction nonadecanoyl-CoA + 1-(9Z-octadecenoyl)-sn-glycero-3-phosphate = 1-(9Z)-octadecenoyl-2-nonadecanoyl-sn-glycero-3-phosphate + CoA. The enzyme catalyses 1-hexadecanoyl-sn-glycero-3-phosphocholine + (9Z)-octadecenoyl-CoA = 1-hexadecanoyl-2-(9Z-octadecenoyl)-sn-glycero-3-phosphocholine + CoA. The catalysed reaction is 1-O-hexadecyl-sn-glycero-3-phosphocholine + acetyl-CoA = 1-O-hexadecyl-2-acetyl-sn-glycero-3-phosphocholine + CoA. It carries out the reaction 1-O-octadecyl-sn-glycero-3-phosphocholine + acetyl-CoA = 1-O-octadecyl-2-acetyl-sn-glycero-3-phosphocholine + CoA. It catalyses the reaction 1-hexadecanoyl-sn-glycero-3-phosphocholine + acetyl-CoA = 1-hexadecanoyl-2-acetyl-sn-glycero-3-phosphocholine + CoA. The enzyme catalyses 1-octadecanoyl-sn-glycero-3-phosphocholine + acetyl-CoA = 1-octadecanoyl-2-acetyl-sn-glycero-3-phosphocholine + CoA. The catalysed reaction is a 1-O-(1Z-alkenyl)-sn-glycero-3-phosphocholine + acetyl-CoA = 1-O-(1Z)-alkenyl-2-acetyl-sn-glycero-3-phosphocholine + CoA. It carries out the reaction 1-O-octadecyl-sn-glycero-3-phosphocholine + (5Z,8Z,11Z,14Z)-eicosatetraenoyl-CoA = 1-O-octadecyl-2-(5Z,8Z,11Z,14Z)-eicosatetraenoyl-sn-glycero-3-phosphocholine + CoA. The protein operates within lipid metabolism; phospholipid metabolism. In terms of biological role, exhibits both acyltransferase and acetyltransferase activities. Catalyzes the conversion of lysophosphatidylcholine (1-acyl-sn-glycero-3-phosphocholine or LPC) into phosphatidylcholine (1,2-diacyl-sn-glycero-3-phosphocholine or PC). Catalyzes the conversion 1-acyl-sn-glycerol-3-phosphate (lysophosphatidic acid or LPA) into 1,2-diacyl-sn-glycerol-3-phosphate (phosphatidic acid or PA) by incorporating an acyl moiety at the sn-2 position of the glycerol backbone. Involved in platelet-activating factor (PAF) biosynthesis by catalyzing the conversion of the PAF precursor, 1-O-alkyl-sn-glycero-3-phosphocholine (lyso-PAF) into 1-O-alkyl-2-acetyl-sn-glycero-3-phosphocholine (PAF). Also converts lyso-PAF to 1-O-alkyl-2-acyl-sn-glycero-3-phosphocholine (PC), a major component of cell membranes and a PAF precursor. Under resting conditions, acyltransferase activity is preferred. Upon acute inflammatory stimulus, acetyltransferase activity is enhanced and PAF synthesis increases. Involved in the regulation of lipid droplet number and size. The polypeptide is Lysophosphatidylcholine acyltransferase 2 (LPCAT2) (Homo sapiens (Human)).